Consider the following 1340-residue polypeptide: WASH complex subunit 2 (1340 aa).

The tract at residues 1-219 (MNRTTPDQEL…VGSDRGSIVD (219 aa)) is sufficient for interaction with WASHC3, WASHC4 and WASHC5; required for interaction with WASHC1. 5 positions are modified to phosphoserine: S157, S159, S204, S205, and S209. The span at 201–213 (GELSSEEGSVGSD) shows a compositional bias: low complexity. Residues 201 to 404 (GELSSEEGSV…SSSKPGKKIP (204 aa)) are disordered. The segment covering 219-231 (DTEEEKEEEESDE) has biased composition (acidic residues). A compositionally biased stretch (basic and acidic residues) spans 232–241 (DFAHHSDNDQ). 2 stretches are compositionally biased toward acidic residues: residues 249-258 (SDEEEDDDGC) and 265-275 (EKEEEDIEDIE). The residue at position 287 (S287) is a Phosphoserine. Positions 292-306 (LAARIKGDAVGRVDE) are enriched in basic and acidic residues. Residue T330 is modified to Phosphothreonine. The segment covering 354-365 (GSGGGLFSGGKG) has biased composition (gly residues). Residues 355–599 (SGGGLFSGGK…QTLSLQAQGE (245 aa)) form a sufficient for interaction with CCDC93 region. Residues 356–1340 (GGGLFSGGKG…DDPLNAFGGQ (985 aa)) form an interaction with VPS35 region. The LFa 1 signature appears at 366–377 (LFDDEDEESDLF). A phosphoserine mark is found at S394 and S396. 3 short sequence motifs (LFa) span residues 410–418 (VFLGDTDVF), 449–462 (LFDD…DDFF), and 481–490 (IFGDDEGDLF). Disordered regions lie at residues 421-586 (ASVP…GGTA), 618-663 (SSDE…KASL), and 695-838 (DSGG…STGV). Residues 450–461 (FDDDDGDDDDDF) show a composition bias toward acidic residues. A compositionally biased stretch (basic and acidic residues) spans 506–516 (DENKARAEKKV). A compositionally biased stretch (low complexity) spans 517 to 527 (SLPSSKNLKPS). Short sequence motifs (LFa) lie at residues 536–547 (LFSDEEDSEDLF), 571–582 (LFEDEDEEDNLF), and 616–628 (LFSS…WNIP). A phosphoserine mark is found at S538 and S543. Positions 546 to 566 (LFSSQSASKLKGAPLLPGKLP) are enriched in low complexity. Phosphoserine occurs at positions 618 and 619. A compositionally biased stretch (basic and acidic residues) spans 636-646 (SDSRSKGESRD). Short sequence motifs (LFa) lie at residues 663 to 673 (LFEEDEEDDLF), 689 to 701 (LFED…GSLF), and 725 to 737 (LFSD…AQLG). A phosphoserine mark is found at S727, S751, S786, and S801. Residues 740 to 767 (PVDKKVESAKESLKFGRTDVAESEKEGL) are compositionally biased toward basic and acidic residues. An LFa 11 motif is present at residues 802–816 (LFDEEEDKMEDQNTI). Over residues 822–833 (EVGKGRDPDARP) the composition is skewed to basic and acidic residues. 2 consecutive short sequence motifs (LFa) follow at residues 838 to 846 (VFQDEELLF) and 855 to 861 (DPDVDLF). A phosphoserine mark is found at S873 and S876. An LFa 14 motif is present at residues 877 to 887 (LFGDDEDDDLF). 2 disordered regions span residues 906–950 (DYSV…KEPS) and 987–1205 (FPSS…EDED). Basic and acidic residues predominate over residues 916–930 (KHPETIQGIKEKGIW). The interval 936-1340 (QDSSGLAPFK…DDPLNAFGGQ (405 aa)) is interaction with phospholipids. Residues 1027-1045 (NKSRVKMRGKRRPQTRAAR) are compositionally biased toward basic residues. A required for interaction with F-actin-capping protein subunit alpha (CAPZA1 or CAPZA2 or CAPZA3) region spans residues 1028 to 1046 (KSRVKMRGKRRPQTRAARR). Residues S1053 and S1086 each carry the phosphoserine modification. Residues 1093-1109 (EALAAAAAPWEGGPVPG) are compositionally biased toward low complexity. The residue at position 1113 (S1113) is a Phosphoserine. 6 short sequence motifs (LFa) span residues 1128–1135 (LFDSGDIF), 1170–1184 (MFPA…DDLF), 1200–1208 (LLEDEDDLF), 1233–1239 (IFEDDIF), 1261–1269 (LFDDNIDIF), and 1289–1298 (IFDDDMDDIF). 2 positions are modified to phosphoserine: S1178 and S1179. The disordered stretch occupies residues 1301–1325 (GIQAKTAKPKSRSAQAAPEPRFEHK). The LFa 21 motif lies at 1329–1337 (IFDDPLNAF).

The protein belongs to the FAM21 family. Component of the WASH core complex also described as WASH regulatory complex (SHRC) composed of WASHC1, WASHC2, WASHC3, WASHC4 and WASHC5; in the complex interacts (via N-terminus) directly with WASHC1. The WASH core complex associates with the F-actin-capping protein dimer (formed by CAPZA1, CAPZA2 or CAPZA3 and CAPZB) in a transient or substoichiometric manner which was initially described as WASH complex. Interacts with VPS35; mediates the association with the retromer CSC complex. Interacts with FKBP15. Interacts with CCDC93, CCDC22, VPS35L; indicative for an association of the WASH core complex with the CCC and retriever complexes. Directly interacts with TBC1D23.

Its subcellular location is the early endosome membrane. The protein localises to the cell membrane. Functionally, acts as a component of the WASH core complex that functions as a nucleation-promoting factor (NPF) at the surface of endosomes, where it recruits and activates the Arp2/3 complex to induce actin polymerization, playing a key role in the fission of tubules that serve as transport intermediates during endosome sorting. Mediates the recruitment of the WASH core complex to endosome membranes via binding to phospholipids and VPS35 of the retromer CSC. Mediates the recruitment of the F-actin-capping protein dimer to the WASH core complex probably promoting localized F-actin polymerization needed for vesicle scission. Via its C-terminus binds various phospholipids, most strongly phosphatidylinositol 4-phosphate (PtdIns-(4)P), phosphatidylinositol 5-phosphate (PtdIns-(5)P) and phosphatidylinositol 3,5-bisphosphate (PtdIns-(3,5)P2). Involved in the endosome-to-plasma membrane trafficking and recycling of SNX27-retromer-dependent cargo proteins, such as GLUT1. Required for the association of DNAJC13, ENTR1, ANKRD50 with retromer CSC subunit VPS35. Required for the endosomal recruitment of CCC and retriever complexes subunits COMMD1 and CCDC93 as well as the retrievere complex subunit VPS35L. The chain is WASH complex subunit 2 from Pongo abelii (Sumatran orangutan).